The primary structure comprises 181 residues: ATP synthase subunit b (181 aa).

A helical membrane pass occupies residues 24 to 44 (LFPNLPNFIAHLLATIVLVIV).

Belongs to the ATPase B chain family. As to quaternary structure, F-type ATPases have 2 components, F(1) - the catalytic core - and F(0) - the membrane proton channel. F(1) has five subunits: alpha(3), beta(3), gamma(1), delta(1), epsilon(1). F(0) has three main subunits: a(1), b(2) and c(10-14). The alpha and beta chains form an alternating ring which encloses part of the gamma chain. F(1) is attached to F(0) by a central stalk formed by the gamma and epsilon chains, while a peripheral stalk is formed by the delta and b chains.

The protein localises to the cell membrane. F(1)F(0) ATP synthase produces ATP from ADP in the presence of a proton or sodium gradient. F-type ATPases consist of two structural domains, F(1) containing the extramembraneous catalytic core and F(0) containing the membrane proton channel, linked together by a central stalk and a peripheral stalk. During catalysis, ATP synthesis in the catalytic domain of F(1) is coupled via a rotary mechanism of the central stalk subunits to proton translocation. Functionally, component of the F(0) channel, it forms part of the peripheral stalk, linking F(1) to F(0). The polypeptide is ATP synthase subunit b (Mycoplasma capricolum subsp. capricolum (strain California kid / ATCC 27343 / NCTC 10154)).